Reading from the N-terminus, the 500-residue chain is Cholesterol 24-hydroxylase (500 aa).

Residues 3–23 form a helical membrane-spanning segment; sequence PGLLLLGSAVLLAFGLCCTFV. C437 is a heme binding site.

It belongs to the cytochrome P450 family. Heme serves as cofactor. In terms of tissue distribution, expressed in brain. The mRNA was broadly distributed with higher levels in gray matter zones and lower levels in regions rich in white matter. Not detected in fetal sample but its expression increases linearly with age.

The protein localises to the endoplasmic reticulum membrane. It localises to the microsome membrane. Its subcellular location is the postsynapse. The protein resides in the presynapse. It is found in the cell projection. The protein localises to the dendrite. The enzyme catalyses cholesterol + reduced [NADPH--hemoprotein reductase] + O2 = (24S)-hydroxycholesterol + oxidized [NADPH--hemoprotein reductase] + H2O + H(+). It catalyses the reaction cholestanol + reduced [NADPH--hemoprotein reductase] + O2 = (24S)-hydroxycholestanol + oxidized [NADPH--hemoprotein reductase] + H2O + H(+). It carries out the reaction 7-dehydrocholesterol + reduced [NADPH--hemoprotein reductase] + O2 = cholesta-5,7-dien-3beta,24S-diol + oxidized [NADPH--hemoprotein reductase] + H2O + H(+). The catalysed reaction is 7-dehydrocholesterol + reduced [NADPH--hemoprotein reductase] + O2 = cholesta-5,7-dien-3beta,25-diol + oxidized [NADPH--hemoprotein reductase] + H2O + H(+). The enzyme catalyses desmosterol + reduced [NADPH--hemoprotein reductase] + O2 = (24Z),26-hydroxydesmosterol + oxidized [NADPH--hemoprotein reductase] + H2O + H(+). It catalyses the reaction desmosterol + reduced [NADPH--hemoprotein reductase] + O2 = (24S)-25-epoxycholesterol + oxidized [NADPH--hemoprotein reductase] + H2O + H(+). It carries out the reaction 4beta-hydroxycholesterol + reduced [NADPH--hemoprotein reductase] + O2 = 4beta,24S-dihydroxycholesterol + oxidized [NADPH--hemoprotein reductase] + H2O + H(+). The catalysed reaction is (24S)-hydroxycholesterol + reduced [NADPH--hemoprotein reductase] + O2 = (24S,25R)-24,26-dihydroxycholesterol + oxidized [NADPH--hemoprotein reductase] + H2O + H(+). The enzyme catalyses (24S)-hydroxycholesterol + reduced [NADPH--hemoprotein reductase] + O2 = 24S,25-dihydroxycholesterol + oxidized [NADPH--hemoprotein reductase] + H2O + H(+). It catalyses the reaction 7alpha-hydroxycholesterol + reduced [NADPH--hemoprotein reductase] + O2 = (24S)-7alpha-dihydroxycholesterol + oxidized [NADPH--hemoprotein reductase] + H2O + H(+). It carries out the reaction progesterone + reduced [NADPH--hemoprotein reductase] + O2 = 17alpha-hydroxyprogesterone + oxidized [NADPH--hemoprotein reductase] + H2O + H(+). The catalysed reaction is testosterone + reduced [NADPH--hemoprotein reductase] + O2 = 16beta,17beta-dihydroxyandrost-4-en-3-one + oxidized [NADPH--hemoprotein reductase] + H2O + H(+). The enzyme catalyses testosterone + reduced [NADPH--hemoprotein reductase] + O2 = 2-hydroxytestosterone + oxidized [NADPH--hemoprotein reductase] + H2O + H(+). It catalyses the reaction testosterone + reduced [NADPH--hemoprotein reductase] + O2 = 6beta,17beta-dihydroxyandrost-4-en-3-one + oxidized [NADPH--hemoprotein reductase] + H2O + H(+). Its pathway is steroid metabolism; cholesterol degradation. It participates in lipid metabolism; C21-steroid hormone metabolism. In terms of biological role, P450 monooxygenase that plays a major role in cholesterol homeostasis in the brain. Primarily catalyzes the hydroxylation (with S stereochemistry) at C-24 of cholesterol side chain, triggering cholesterol diffusion out of neurons and its further degradation. By promoting constant cholesterol elimination in neurons, may activate the mevalonate pathway and coordinate the synthesis of new cholesterol and nonsterol isoprenoids involved in synaptic activity and learning. Further hydroxylates cholesterol derivatives and hormone steroids on both the ring and side chain of these molecules, converting them into active oxysterols involved in lipid signaling and biosynthesis. Acts as an epoxidase converting cholesta-5,24-dien-3beta-ol/desmosterol into (24S),25-epoxycholesterol, an abundant lipid ligand of nuclear NR1H2 and NR1H3 receptors shown to promote neurogenesis in developing brain. May also catalyze the oxidative metabolism of xenobiotics, such as clotrimazole. The chain is Cholesterol 24-hydroxylase from Homo sapiens (Human).